Reading from the N-terminus, the 130-residue chain is MGRKNDIIQKIDSFIGQKIYSLRLAKGLSRQQLAEVIDVTHQQLQKYEKAINRISVGRLVLIAEALDRNIDYFFEGLEEANKPQPVHTQHQRMCIEVSRNFMKINSTEEQQAINNLVKCLAGKEKLKTNV.

One can recognise an HTH cro/C1-type domain in the interval 19 to 73; it reads IYSLRLAKGLSRQQLAEVIDVTHQQLQKYEKAINRISVGRLVLIAEALDRNIDYF. Positions 30–49 form a DNA-binding region, H-T-H motif; the sequence is RQQLAEVIDVTHQQLQKYEK.

This is an uncharacterized protein from Rickettsia prowazekii (strain Madrid E).